The sequence spans 181 residues: Ribosome maturation factor RimP (181 aa).

It belongs to the RimP family.

It is found in the cytoplasm. Required for maturation of 30S ribosomal subunits. In Mycolicibacterium smegmatis (strain ATCC 700084 / mc(2)155) (Mycobacterium smegmatis), this protein is Ribosome maturation factor RimP.